A 185-amino-acid polypeptide reads, in one-letter code: Ribosome-recycling factor (185 aa).

This sequence belongs to the RRF family.

Its subcellular location is the cytoplasm. In terms of biological role, responsible for the release of ribosomes from messenger RNA at the termination of protein biosynthesis. May increase the efficiency of translation by recycling ribosomes from one round of translation to another. The chain is Ribosome-recycling factor from Streptococcus equi subsp. equi (strain 4047).